A 363-amino-acid chain; its full sequence is Glutamate 5-kinase (363 aa).

Residue K6 coordinates ATP. 3 residues coordinate substrate: S46, D133, and N145. ATP-binding positions include 165–166 (TD) and 207–213 (TGGMHTK). The region spanning 271 to 349 (TGRLLLDEGA…RDIEAVLGFT (79 aa)) is the PUA domain.

The protein belongs to the glutamate 5-kinase family.

The protein localises to the cytoplasm. It carries out the reaction L-glutamate + ATP = L-glutamyl 5-phosphate + ADP. It participates in amino-acid biosynthesis; L-proline biosynthesis; L-glutamate 5-semialdehyde from L-glutamate: step 1/2. Functionally, catalyzes the transfer of a phosphate group to glutamate to form L-glutamate 5-phosphate. This Deinococcus geothermalis (strain DSM 11300 / CIP 105573 / AG-3a) protein is Glutamate 5-kinase.